The primary structure comprises 299 residues: ATP synthase gamma chain (299 aa).

This sequence belongs to the ATPase gamma chain family. As to quaternary structure, F-type ATPases have 2 components, CF(1) - the catalytic core - and CF(0) - the membrane proton channel. CF(1) has five subunits: alpha(3), beta(3), gamma(1), delta(1), epsilon(1). CF(0) has three main subunits: a, b and c.

It is found in the cell membrane. Its function is as follows. Produces ATP from ADP in the presence of a proton gradient across the membrane. The gamma chain is believed to be important in regulating ATPase activity and the flow of protons through the CF(0) complex. The protein is ATP synthase gamma chain of Leifsonia xyli subsp. xyli (strain CTCB07).